We begin with the raw amino-acid sequence, 193 residues long: Cytidylate kinase (193 aa).

Residue 12–20 (GLAGSGTTT) participates in ATP binding.

It belongs to the cytidylate kinase family. Type 2 subfamily.

Its subcellular location is the cytoplasm. It carries out the reaction CMP + ATP = CDP + ADP. The enzyme catalyses dCMP + ATP = dCDP + ADP. This Thermococcus kodakarensis (strain ATCC BAA-918 / JCM 12380 / KOD1) (Pyrococcus kodakaraensis (strain KOD1)) protein is Cytidylate kinase.